We begin with the raw amino-acid sequence, 158 residues long: Cyclic pyranopterin monophosphate synthase (158 aa).

Substrate is bound by residues 74 to 76 and 112 to 113; these read MCH and ME. The active site involves D127.

This sequence belongs to the MoaC family. Homohexamer; trimer of dimers.

It catalyses the reaction (8S)-3',8-cyclo-7,8-dihydroguanosine 5'-triphosphate = cyclic pyranopterin phosphate + diphosphate. The protein operates within cofactor biosynthesis; molybdopterin biosynthesis. Catalyzes the conversion of (8S)-3',8-cyclo-7,8-dihydroguanosine 5'-triphosphate to cyclic pyranopterin monophosphate (cPMP). The chain is Cyclic pyranopterin monophosphate synthase from Helicobacter pylori (strain J99 / ATCC 700824) (Campylobacter pylori J99).